Reading from the N-terminus, the 217-residue chain is Chorionic somatomammotropin hormone 1 (217 aa).

Residues Met1–Ala26 form the signal peptide. A Zn(2+)-binding site is contributed by His44. A disulfide bridge connects residues Cys79 and Cys191. Glu200 contacts Zn(2+). Cys208 and Cys215 are oxidised to a cystine.

Belongs to the somatotropin/prolactin family. Can be found in a monomeric as well as dimeric form.

The protein resides in the secreted. Functionally, produced only during pregnancy and is involved in stimulating lactation, fetal growth and metabolism. Does not interact with GHR but only activates PRLR through zinc-induced dimerization. The polypeptide is Chorionic somatomammotropin hormone 1 (CSH1) (Homo sapiens (Human)).